The primary structure comprises 117 residues: Transcription elongation factor SPT4 (117 aa).

The segment at M1 to L40 is interaction with SUPT5H. Residues C16–C36 form a C4-type zinc finger.

This sequence belongs to the SPT4 family. Interacts with SUPT5H to form the DSIF complex. DSIF interacts with RNA polymerase II and with the positive transcription elongation factor b complex (P-TEFb complex), which is composed of CDK9 and cyclin-T.

The protein localises to the nucleus. May function as a component of the DRB sensitivity-inducing factor complex (DSIF complex), which regulates transcription elongation by RNA polymerase II. Probably enhances transcriptional pausing at sites proximal to the promoter, which may facilitate the assembly of an elongation competent RNA polymerase II complex. Also acts to stimulate transcriptional elongation at low nucleotide concentrations. Regulation of transcriptional elongation by this protein is required for the expression of genes which control neuronal development. The sequence is that of Transcription elongation factor SPT4 (supt4h1) from Danio rerio (Zebrafish).